Here is a 186-residue protein sequence, read N- to C-terminus: Ribosome-recycling factor (186 aa).

The protein belongs to the RRF family.

The protein localises to the cytoplasm. Its function is as follows. Responsible for the release of ribosomes from messenger RNA at the termination of protein biosynthesis. May increase the efficiency of translation by recycling ribosomes from one round of translation to another. The protein is Ribosome-recycling factor of Albidiferax ferrireducens (strain ATCC BAA-621 / DSM 15236 / T118) (Rhodoferax ferrireducens).